Consider the following 228-residue polypeptide: Ribulose-phosphate 3-epimerase (228 aa).

Residue Ser-9 coordinates substrate. Positions 34, 36, 68, and 177 each coordinate a divalent metal cation. Catalysis depends on Asp-36, which acts as the Proton acceptor. Residues His-68, Asp-177–Gly-179, and Gly-199–Ser-200 contribute to the substrate site. The active-site Proton donor is the Asp-177.

It belongs to the ribulose-phosphate 3-epimerase family. The cofactor is a divalent metal cation.

It catalyses the reaction D-ribulose 5-phosphate = D-xylulose 5-phosphate. It functions in the pathway carbohydrate degradation. In terms of biological role, catalyzes the reversible epimerization of D-ribulose 5-phosphate to D-xylulose 5-phosphate. The protein is Ribulose-phosphate 3-epimerase of Buchnera aphidicola subsp. Schizaphis graminum (strain Sg).